The primary structure comprises 927 residues: Protein unc-45 homolog B (927 aa).

TPR repeat units follow at residues 4–37 (PVQL…ITDK), 41–74 (AVLY…DASD), and 76–108 (KALF…EPKN). ARM repeat units follow at residues 167 to 206 (DAGA…GMCT), 209 to 248 (RARA…NIVD), and 746 to 785 (DKLR…NLAV).

It localises to the cytoplasm. Its subcellular location is the myofibril. The protein localises to the sarcomere. The protein resides in the z line. It is found in the a band. It localises to the perinuclear region. Its subcellular location is the cytosol. In terms of biological role, acts as a co-chaperone for HSP90 and is required for proper folding of the myosin motor domain. Plays a role in sarcomere formation during muscle cell assembly. Is necessary for normal early lens development. The protein is Protein unc-45 homolog B of Xenopus laevis (African clawed frog).